The chain runs to 639 residues: Elongation factor 4 (639 aa).

One can recognise a tr-type G domain in the interval 39–221 (TMIRNFCIIA…EIVRRVPAPV (183 aa)). GTP contacts are provided by residues 51-56 (DHGKST) and 168-171 (NKID).

This sequence belongs to the TRAFAC class translation factor GTPase superfamily. Classic translation factor GTPase family. LepA subfamily.

The protein resides in the cell membrane. The catalysed reaction is GTP + H2O = GDP + phosphate + H(+). In terms of biological role, required for accurate and efficient protein synthesis under certain stress conditions. May act as a fidelity factor of the translation reaction, by catalyzing a one-codon backward translocation of tRNAs on improperly translocated ribosomes. Back-translocation proceeds from a post-translocation (POST) complex to a pre-translocation (PRE) complex, thus giving elongation factor G a second chance to translocate the tRNAs correctly. Binds to ribosomes in a GTP-dependent manner. The chain is Elongation factor 4 from Frankia casuarinae (strain DSM 45818 / CECT 9043 / HFP020203 / CcI3).